The following is a 142-amino-acid chain: gSG7 salivary protein (142 aa).

The N-terminal stretch at methionine 1 to alanine 25 is a signal peptide. Intrachain disulfides connect cysteine 83/cysteine 138 and cysteine 106/cysteine 116.

As to quaternary structure, interacts with host coagulation factor XII (F12) (inactive and activated). Interacts with host high molecular weight kininogen (KNG1) (inactive and activated).

Its subcellular location is the secreted. Zn(2+) modulates binding to host coagulation factor XII (F12) and high molecular weight kininogen (KNG1). Salivary protein with anticoagulant activity. Inhibits activation of host kallikrein-kinin system by preventing the reciprocal activation of coagulation factor XII (F12) and prekallikrein (KLKB1), and subsequent release of bradykinin. Inhibits host factor XII and high molecular weight kininogen (KNG1) binding to negatively charged surfaces. Weakly inhibits the alternative pathway of complement system activation in the host. The protein is gSG7 salivary protein of Anopheles stephensi (Indo-Pakistan malaria mosquito).